Here is a 38-residue protein sequence, read N- to C-terminus: Photosystem II reaction center protein L (38 aa).

A helical membrane pass occupies residues 17 to 37; the sequence is SLYWGLLLIFVLAVLFSSYIF.

The protein belongs to the PsbL family. In terms of assembly, PSII is composed of 1 copy each of membrane proteins PsbA, PsbB, PsbC, PsbD, PsbE, PsbF, PsbH, PsbI, PsbJ, PsbK, PsbL, PsbM, PsbT, PsbY, PsbZ, Psb30/Ycf12, at least 3 peripheral proteins of the oxygen-evolving complex and a large number of cofactors. It forms dimeric complexes.

Its subcellular location is the plastid. The protein localises to the chloroplast thylakoid membrane. Its function is as follows. One of the components of the core complex of photosystem II (PSII). PSII is a light-driven water:plastoquinone oxidoreductase that uses light energy to abstract electrons from H(2)O, generating O(2) and a proton gradient subsequently used for ATP formation. It consists of a core antenna complex that captures photons, and an electron transfer chain that converts photonic excitation into a charge separation. This subunit is found at the monomer-monomer interface and is required for correct PSII assembly and/or dimerization. The protein is Photosystem II reaction center protein L of Euglena gracilis.